The following is an 845-amino-acid chain: Leucine--tRNA ligase (845 aa).

Positions 40 to 51 (PYPSGAGLHVGH) match the 'HIGH' region motif. A 'KMSKS' region motif is present at residues 623–627 (KMSKS). An ATP-binding site is contributed by Lys626.

This sequence belongs to the class-I aminoacyl-tRNA synthetase family.

It is found in the cytoplasm. It carries out the reaction tRNA(Leu) + L-leucine + ATP = L-leucyl-tRNA(Leu) + AMP + diphosphate. The polypeptide is Leucine--tRNA ligase (Protochlamydia amoebophila (strain UWE25)).